The primary structure comprises 314 residues: Ribosome maturation factor RimP (314 aa).

Disordered regions lie at residues 1–20 (MDLD…QPLS), 152–176 (PIEA…AKPE), and 206–314 (AAKA…PAPK). A compositionally biased stretch (polar residues) spans 10-19 (PSAQVGQQPL). The segment covering 215 to 227 (DGNNEEQDEEQEE) has biased composition (acidic residues). Positions 247–256 (PEHNPAQNPI) are enriched in polar residues. Basic and acidic residues-rich tracts occupy residues 270 to 279 (TEFKKSKTGE) and 303 to 314 (SGHDMPRKPAPK).

The protein belongs to the RimP family.

Its subcellular location is the cytoplasm. In terms of biological role, required for maturation of 30S ribosomal subunits. This Beijerinckia indica subsp. indica (strain ATCC 9039 / DSM 1715 / NCIMB 8712) protein is Ribosome maturation factor RimP.